The following is a 220-amino-acid chain: GTP cyclohydrolase 1 (220 aa).

Zn(2+)-binding residues include C109, H112, and C180.

The protein belongs to the GTP cyclohydrolase I family. Homomer.

The enzyme catalyses GTP + H2O = 7,8-dihydroneopterin 3'-triphosphate + formate + H(+). Its pathway is cofactor biosynthesis; 7,8-dihydroneopterin triphosphate biosynthesis; 7,8-dihydroneopterin triphosphate from GTP: step 1/1. The sequence is that of GTP cyclohydrolase 1 from Pectobacterium carotovorum subsp. carotovorum (strain PC1).